We begin with the raw amino-acid sequence, 172 residues long: DNA-directed RNA polymerase II subunit RPB7 (172 aa).

This sequence belongs to the eukaryotic RPB7/RPC8 RNA polymerase subunit family. As to quaternary structure, component of the RNA polymerase II (Pol II) complex consisting of 12 subunits. RPB4 and RPB7 form a subcomplex that protrudes from the 10-subunit Pol II core complex.

The protein localises to the nucleus. Its function is as follows. DNA-dependent RNA polymerase catalyzes the transcription of DNA into RNA using the four ribonucleoside triphosphates as substrates. Component of RNA polymerase II which synthesizes mRNA precursors and many functional non-coding RNAs. Pol II is the central component of the basal RNA polymerase II transcription machinery. It is composed of mobile elements that move relative to each other. RPB7 is part of a subcomplex with RPB4 that binds to a pocket formed by RPB1, RPB2 and RPB6 at the base of the clamp element. The RPB4-RPB7 subcomplex seems to lock the clamp via RPB7 in the closed conformation thus preventing double-stranded DNA to enter the active site cleft. The RPB4-RPB7 subcomplex binds single-stranded DNA and RNA. This chain is DNA-directed RNA polymerase II subunit RPB7 (polr2g), found in Danio rerio (Zebrafish).